The primary structure comprises 409 residues: uncharacterized protein (409 aa).

Residues 36–50 show a composition bias toward basic and acidic residues; the sequence is HLKAKARAQESDSDR. Disordered stretches follow at residues 36 to 67, 239 to 298, and 338 to 373; these read HLKA…TFSS, IENT…SSTI, and RSQI…TGPR. Low complexity predominate over residues 51-67; it reads PCSSIESSSEPASTFSS. Over residues 245 to 265 the composition is skewed to basic and acidic residues; that stretch reads VREESNQEHPPGKQEKTEKHP. Residues 268-281 are compositionally biased toward polar residues; sequence LQGSHQAEPETSSK. 2 stretches are compositionally biased toward basic and acidic residues: residues 282 to 294 and 338 to 350; these read NSEE…KMDD and RSQI…EGRR.

This is an uncharacterized protein from Homo sapiens (Human).